The primary structure comprises 518 residues: Chromosomal replication initiator protein DnaA (518 aa).

The domain I, interacts with DnaA modulators stretch occupies residues methionine 1 to alanine 73. Residues alanine 73–threonine 180 are domain II. The interval histidine 144 to threonine 180 is disordered. Basic and acidic residues predominate over residues alanine 164 to tyrosine 177. Residues asparagine 181–serine 397 are domain III, AAA+ region. Residues glycine 225, glycine 227, lysine 228, and threonine 229 each contribute to the ATP site. Residues arginine 398–asparagine 518 form a domain IV, binds dsDNA region.

This sequence belongs to the DnaA family. In terms of assembly, oligomerizes as a right-handed, spiral filament on DNA at oriC.

It is found in the cytoplasm. Functionally, plays an essential role in the initiation and regulation of chromosomal replication. ATP-DnaA binds to the origin of replication (oriC) to initiate formation of the DNA replication initiation complex once per cell cycle. Binds the DnaA box (a 9 base pair repeat at the origin) and separates the double-stranded (ds)DNA. Forms a right-handed helical filament on oriC DNA; dsDNA binds to the exterior of the filament while single-stranded (ss)DNA is stabiized in the filament's interior. The ATP-DnaA-oriC complex binds and stabilizes one strand of the AT-rich DNA unwinding element (DUE), permitting loading of DNA polymerase. After initiation quickly degrades to an ADP-DnaA complex that is not apt for DNA replication. Binds acidic phospholipids. The protein is Chromosomal replication initiator protein DnaA of Neisseria gonorrhoeae (strain ATCC 700825 / FA 1090).